A 512-amino-acid polypeptide reads, in one-letter code: PTS system mannitol-specific EIICB component (512 aa).

The Cytoplasmic segment spans residues 1-28 (MSQTEEKKGIGRRVQAFGSFLSSMIMPN). The 333-residue stretch at 17–349 (FGSFLSSMIM…MKFTREPKQD (333 aa)) folds into the PTS EIIC type-2 domain. Residues 29–50 (IGAFIAWGFIAAIFIDNGWLPN) form a helical membrane-spanning segment. Over 51–54 (KDLA) the chain is Extracellular. The helical transmembrane segment at 55–75 (TLAGPMITYLIPLLIAFSGGR) threads the bilayer. Residues 76-139 (LIYDLRGGII…QGFEMLFNNF (64 aa)) are Cytoplasmic-facing. A helical transmembrane segment spans residues 140-161 (SAGILGFIMTIAGFKILAPLMK). Residues 162-170 (FIMHILSVA) are Extracellular-facing. A helical transmembrane segment spans residues 171-191 (VEALVHAHLLPLVSILVEPAK). The Cytoplasmic segment spans residues 192-278 (IVFLNNAINH…VLMRPLLFIA (87 aa)). Residues 279-298 (VILGGMTGVATYQATGFGFK) form a helical membrane-spanning segment. The Extracellular portion of the chain corresponds to 299–318 (SPASPGSFIVYCLNAPRGEF). Residues 319–340 (LHMLLGVFLAALVSFVVAALIM) form a helical membrane-spanning segment. Residues 341 to 512 (KFTREPKQDL…LNNLKKDDQA (172 aa)) lie on the Cytoplasmic side of the membrane. The tract at residues 355-402 (AQMENTKGKKSSVASKLVSSDKNVNTEENASGNVSETSSSDDDPEALL) is disordered. Positions 365 to 376 (SSVASKLVSSDK) are enriched in low complexity. The segment covering 380–392 (TEENASGNVSETS) has biased composition (polar residues). The region spanning 419-512 (NHVIFACDAG…LNNLKKDDQA (94 aa)) is the PTS EIIB type-2 domain. Cys425 (phosphocysteine intermediate; for EIIB activity) is an active-site residue. Phosphocysteine; by EIIA is present on Cys425.

In terms of assembly, homodimer.

It is found in the cell membrane. It catalyses the reaction D-mannitol(out) + N(pros)-phospho-L-histidyl-[protein] = D-mannitol 1-phosphate(in) + L-histidyl-[protein]. Its function is as follows. The phosphoenolpyruvate-dependent sugar phosphotransferase system (sugar PTS), a major carbohydrate active transport system, catalyzes the phosphorylation of incoming sugar substrates concomitantly with their translocation across the cell membrane. The enzyme II CmtAB PTS system is involved in D-mannitol transport. In Staphylococcus aureus (strain COL), this protein is PTS system mannitol-specific EIICB component (mtlA).